Reading from the N-terminus, the 515-residue chain is Protein disulfide-isomerase (515 aa).

The first 20 residues, 1-20 (MRSFAPWLVSLLGASAVVAA), serve as a signal peptide directing secretion. Thioredoxin domains follow at residues 21 to 132 (ADTE…QSLP) and 339 to 470 (VLDG…ENGK). Active-site nucleophile residues include cysteine 54, cysteine 57, cysteine 389, and cysteine 392. 2 cysteine pairs are disulfide-bonded: cysteine 54–cysteine 57 and cysteine 389–cysteine 392. Residues 478-515 (VASEETQEGGDVTEAAPSATEAETPAATDDEKAEHDEL) form a disordered region. The span at 490–504 (TEAAPSATEAETPAA) shows a compositional bias: low complexity. The segment covering 506–515 (DDEKAEHDEL) has biased composition (basic and acidic residues). The short motif at 512-515 (HDEL) is the Prevents secretion from ER element.

This sequence belongs to the protein disulfide isomerase family.

It is found in the endoplasmic reticulum lumen. The catalysed reaction is Catalyzes the rearrangement of -S-S- bonds in proteins.. Participates in the folding of proteins containing disulfide bonds, may be involved in glycosylation, prolyl hydroxylation and triglyceride transfer. The protein is Protein disulfide-isomerase (pdiA) of Aspergillus niger.